Consider the following 65-residue polypeptide: Gallinacin-12 (65 aa).

Positions 1-19 (MRNLCFVFIFISLLAHGST) are cleaved as a signal peptide. 3 disulfide bridges follow: C25–C54, C32–C47, and C37–C55.

Belongs to the beta-defensin family. As to expression, expressed in the large intestine, kidney liver, gall bladder, testis, ovary and male and female reproductive tracts. Expressed in the ovarian stroma and the theca and granulosa layers of the ovarian follicle.

It localises to the secreted. The protein localises to the cytoplasmic granule. In terms of biological role, has bactericidal activity. This is Gallinacin-12 (GAL12) from Gallus gallus (Chicken).